A 160-amino-acid polypeptide reads, in one-letter code: Cytochrome b6-f complex subunit 4 (160 aa).

3 helical membrane-spanning segments follow: residues 36-56 (LLYIFPVVILGTIACVVGLAV), 95-115 (LLGIALQTLIPLGLMILPFIE), and 128-148 (IAMSVFLFGTFLTIYLGIGAC).

This sequence belongs to the cytochrome b family. PetD subfamily. The 4 large subunits of the cytochrome b6-f complex are cytochrome b6, subunit IV (17 kDa polypeptide, PetD), cytochrome f and the Rieske protein, while the 4 small subunits are PetG, PetL, PetM and PetN. The complex functions as a dimer.

The protein resides in the cellular thylakoid membrane. Functionally, component of the cytochrome b6-f complex, which mediates electron transfer between photosystem II (PSII) and photosystem I (PSI), cyclic electron flow around PSI, and state transitions. The sequence is that of Cytochrome b6-f complex subunit 4 from Prochlorococcus marinus (strain MIT 9301).